The sequence spans 806 residues: 85/88 kDa calcium-independent phospholipase A2 (806 aa).

9 ANK repeats span residues 120-147 (WSVAHLAVELGIRECFHHSRIISCANCA), 151-181 (EGCTPLHLACRKGDGEILVELVQYCHTQMDV), 185-215 (KGETVFHYAVQGDNSQVLQLLGRNAVAGLNQ), 219-248 (QGLTPLHLACQLGKQEMVRVLLLCNARCNI), 251-281 (PNGYPIHSAMKFSQKGCAEMIISMDSSQIHS), 286-312 (YGASPLHWAKNAEMARMLLKRGCNVNS), 316-345 (AGNTALHVAVMRNRFDCAIVLLTHGANADA), 349-378 (HGNTPLHLAMSKDNVEMIKALIVFGAEVDT), and 382-403 (FGETPTFLASKIGRLVTRKAIL). A run of 2 helical transmembrane segments spans residues 480–500 (LLCLDGGGVKGLIIIQLLIAI) and 511–531 (LFDWVAGTSTGGILALAILHS). Positions 481–665 (LCLDGGGVKG…LANNPTLDAM (185 aa)) constitute a PNPLA domain. The GXGXXG signature appears at 485–490 (GGGVKG). Positions 517–521 (GTSTG) match the GXSXG motif. S519 functions as the Nucleophile in the catalytic mechanism. D652 acts as the Proton acceptor in catalysis. A DGA/G motif is present at residues 652-654 (DGG). A calmodulin-binding (1-9-14 motif) region spans residues 677-686 (RKGQANKVKK). A calmodulin-binding (IQ motif) region spans residues 748 to 759 (AWCEMVGIQYFR).

Homodimer formed by catalytic domains tightly interacting through a large hydrophobic interface. The contact area involves 3 alpha helices, several loops and a part of the beta sheet from each monomer. Both active sites of the dimer are in close proximity adopting an open conformation that provide sufficient space for phospholipid access and favoring cooperativity in deacylation-reacylation reactions. Each monomer has 9 ankyrin repeats stacked side-by-side in an elongated structure oriented outwards from the catalytic core. Four different transcripts were found to be expressed in a distinct tissue distribution.

Its subcellular location is the cytoplasm. It is found in the cell membrane. The protein resides in the mitochondrion. It localises to the cell projection. The protein localises to the pseudopodium. The enzyme catalyses a 1,2-diacyl-sn-glycero-3-phosphocholine + H2O = a 1-acyl-sn-glycero-3-phosphocholine + a fatty acid + H(+). It catalyses the reaction a 1-O-alkyl-2-acyl-sn-glycero-3-phosphocholine + H2O = a 1-O-alkyl-sn-glycero-3-phosphocholine + a fatty acid + H(+). It carries out the reaction 1,2-dihexadecanoyl-sn-glycero-3-phosphocholine + H2O = 1-hexadecanoyl-sn-glycero-3-phosphocholine + hexadecanoate + H(+). The catalysed reaction is 1-hexadecanoyl-2-(9Z-octadecenoyl)-sn-glycero-3-phosphocholine + H2O = 1-hexadecanoyl-sn-glycero-3-phosphocholine + (9Z)-octadecenoate + H(+). The enzyme catalyses 1-hexadecanoyl-2-(9Z,12Z-octadecadienoyl)-sn-glycero-3-phosphocholine + H2O = (9Z,12Z)-octadecadienoate + 1-hexadecanoyl-sn-glycero-3-phosphocholine + H(+). It catalyses the reaction 1-hexadecanoyl-2-(5Z,8Z,11Z,14Z-eicosatetraenoyl)-sn-glycero-3-phosphocholine + H2O = 1-hexadecanoyl-sn-glycero-3-phosphocholine + (5Z,8Z,11Z,14Z)-eicosatetraenoate + H(+). It carries out the reaction 1-octadecanoyl-2-(5Z,8Z,11Z,14Z-eicosatetraenoyl)-sn-glycero-3-phosphocholine + H2O = 1-octadecanoyl-sn-glycero-3-phosphocholine + (5Z,8Z,11Z,14Z)-eicosatetraenoate + H(+). The catalysed reaction is 1-hexadecanoyl-2-(5Z,8Z,11Z,14Z-eicosatetraenoyl)-sn-glycero-3-phosphoethanolamine + H2O = 1-hexadecanoyl-sn-glycero-3-phosphoethanolamine + (5Z,8Z,11Z,14Z)-eicosatetraenoate + H(+). The enzyme catalyses 1,2-dihexadecanoyl-sn-glycero-3-phosphate + H2O = 1-hexadecanoyl-sn-glycero-3-phosphate + hexadecanoate + H(+). It catalyses the reaction a 1-acyl-sn-glycero-3-phosphocholine + H2O = sn-glycerol 3-phosphocholine + a fatty acid + H(+). It carries out the reaction 1-hexadecanoyl-sn-glycero-3-phosphocholine + H2O = sn-glycerol 3-phosphocholine + hexadecanoate + H(+). The catalysed reaction is 1-(5Z,8Z,11Z,14Z-eicosatetraenoyl)-sn-glycero-3-phosphocholine + H2O = sn-glycerol 3-phosphocholine + (5Z,8Z,11Z,14Z)-eicosatetraenoate + H(+). The enzyme catalyses 2-(5Z,8Z,11Z,14Z)-eicosatetraenoyl-sn-glycero-3-phosphocholine + H2O = sn-glycerol 3-phosphocholine + (5Z,8Z,11Z,14Z)-eicosatetraenoate + H(+). It catalyses the reaction 1-O-hexadecyl-2-(5Z,8Z,11Z,14Z)-eicosatetraenoyl-sn-glycero-3-phosphocholine + H2O = 1-O-hexadecyl-sn-glycero-3-phosphocholine + (5Z,8Z,11Z,14Z)-eicosatetraenoate + H(+). It carries out the reaction 1-O-hexadecyl-2-acetyl-sn-glycero-3-phosphocholine + H2O = 1-O-hexadecyl-sn-glycero-3-phosphocholine + acetate + H(+). The catalysed reaction is hexadecanoyl-CoA + H2O = hexadecanoate + CoA + H(+). The enzyme catalyses 1',3'-bis[1,2-di-(9Z-octadecenoyl)-sn-glycero-3-phospho]-glycerol + H2O = 1'-[1,2-di-(9Z-octadecenoyl)-sn-glycero-3-phospho]-3'-[1-(9Z-octadecenoyl)-sn-glycero-3-phospho]-glycerol + (9Z)-octadecenoate + H(+). It catalyses the reaction 1'-[1,2-di-(9Z-octadecenoyl)-sn-glycero-3-phospho]-3'-[1-(9Z-octadecenoyl)-sn-glycero-3-phospho]-glycerol + H2O = 1',3'-bis-[1-(9Z-octadecenoyl)-sn-glycero-3-phospho]-glycerol + (9Z)-octadecenoate + H(+). It carries out the reaction 1',3'-bis-[1,2-di-(9Z,12Z-octadecadienoyl)-sn-glycero-3-phospho]-glycerol + H2O = 1'-[1,2-di-(9Z,12Z-octadecadienoyl)-sn-glycero-3-phospho]-3'-[1-(9Z,12Z-octadecadienoyl)-sn-glycero-3-phospho]-glycerol + (9Z,12Z)-octadecadienoate + H(+). The catalysed reaction is 1-octadecanoyl-2-(15-hydroxy-(5Z,8Z,11Z,13E)-eicosatetraenoyl)-sn-glycero-3-phosphoethanolamine + H2O = 1-octadecanoyl-sn-glycero-3-phosphoethanolamine + 15-hydroxy-(5Z,8Z,11Z,13E)-eicosatetraenoate + H(+). Activated by ATP. Inhibited by calcium-activated calmodulin. Inhibited by bromoenol lactone (BEL). In terms of biological role, calcium-independent phospholipase involved in phospholipid remodeling with implications in cellular membrane homeostasis, mitochondrial integrity and signal transduction. Hydrolyzes the ester bond of the fatty acyl group attached at sn-1 or sn-2 position of phospholipids (phospholipase A1 and A2 activity respectively), producing lysophospholipids that are used in deacylation-reacylation cycles. Hydrolyzes both saturated and unsaturated long fatty acyl chains in various glycerophospholipid classes such as phosphatidylcholines, phosphatidylethanolamines and phosphatidates, with a preference for hydrolysis at sn-2 position. Can further hydrolyze lysophospholipids carrying saturated fatty acyl chains (lysophospholipase activity). Upon oxidative stress, contributes to remodeling of mitochondrial phospholipids in pancreatic beta cells, in a repair mechanism to reduce oxidized lipid content. Preferentially hydrolyzes oxidized polyunsaturated fatty acyl chains from cardiolipins, yielding monolysocardiolipins that can be reacylated with unoxidized fatty acyls to regenerate native cardiolipin species. Hydrolyzes oxidized glycerophosphoethanolamines present in pancreatic islets, releasing oxidized polyunsaturated fatty acids such as hydroxyeicosatetraenoates (HETEs). Has thioesterase activity toward fatty-acyl CoA releasing CoA-SH known to facilitate fatty acid transport and beta-oxidation in mitochondria particularly in skeletal muscle. Plays a role in regulation of membrane dynamics and homeostasis. Selectively hydrolyzes sn-2 arachidonoyl group in plasmalogen phospholipids, structural components of lipid rafts and myelin. Regulates F-actin polymerization at the pseudopods, which is required for both speed and directionality of MCP1/CCL2-induced monocyte chemotaxis. Targets membrane phospholipids to produce potent lipid signaling messengers. Generates lysophosphatidate (LPA, 1-acyl-glycerol-3-phosphate), which acts via G-protein receptors in various cell types. Has phospholipase A2 activity toward platelet-activating factor (PAF, 1-O-alkyl-2-acetyl-sn-glycero-3-phosphocholine), likely playing a role in inactivation of this potent pro-inflammatory signaling lipid. In response to glucose, amplifies calcium influx in pancreatic beta cells to promote INS secretion. Lacks the catalytic domain and may act as a negative regulator of the catalytically active isoforms. The protein is 85/88 kDa calcium-independent phospholipase A2 (PLA2G6) of Homo sapiens (Human).